Reading from the N-terminus, the 224-residue chain is UPF0758 protein SPO0054 (224 aa).

In terms of domain architecture, MPN spans 102–224; sequence VISSWDALLD…ELSFRAEGYL (123 aa). Zn(2+) contacts are provided by His173, His175, and Asp186. A JAMM motif motif is present at residues 173–186; sequence HNHPSGDPTPSQSD.

The protein belongs to the UPF0758 family.

In Ruegeria pomeroyi (strain ATCC 700808 / DSM 15171 / DSS-3) (Silicibacter pomeroyi), this protein is UPF0758 protein SPO0054.